Reading from the N-terminus, the 625-residue chain is Probable potassium transport system protein Kup 2 (625 aa).

12 helical membrane-spanning segments follow: residues 10-30 (LAAL…TSPL), 47-67 (GVHL…VVTL), 104-124 (VLLL…VITP), 140-160 (PAFK…LFAV), 172-192 (FGPV…AEII), 214-234 (GWHM…VEAL), 250-270 (WLGL…ALLM), 283-303 (LFPQ…TVIA), 347-367 (WLLL…SALA), 369-389 (AYGI…FFVV), 396-416 (PLPV…LLVV), and 422-442 (FFQG…VMAT).

The protein belongs to the HAK/KUP transporter (TC 2.A.72) family.

The protein localises to the cell inner membrane. It catalyses the reaction K(+)(in) + H(+)(in) = K(+)(out) + H(+)(out). Its function is as follows. Transport of potassium into the cell. Likely operates as a K(+):H(+) symporter. This is Probable potassium transport system protein Kup 2 from Albidiferax ferrireducens (strain ATCC BAA-621 / DSM 15236 / T118) (Rhodoferax ferrireducens).